We begin with the raw amino-acid sequence, 391 residues long: uncharacterized protein (391 aa).

Belongs to the mycobacterial PPE family.

This is an uncharacterized protein from Mycobacterium tuberculosis (strain CDC 1551 / Oshkosh).